The sequence spans 209 residues: Large ribosomal subunit protein bL9 (209 aa).

Residues 169 to 209 (RDGASFTEDYDPNAEPGLATEAEEAVADADDNAETNSEESL) are disordered. The span at 189 to 209 (EAEEAVADADDNAETNSEESL) shows a compositional bias: acidic residues.

The protein belongs to the bacterial ribosomal protein bL9 family.

Functionally, binds to the 23S rRNA. The sequence is that of Large ribosomal subunit protein bL9 from Zymomonas mobilis subsp. mobilis (strain ATCC 31821 / ZM4 / CP4).